Reading from the N-terminus, the 310-residue chain is Lipoyl synthase (310 aa).

Positions 41, 46, 52, 68, 72, 75, and 281 each coordinate [4Fe-4S] cluster. Residues 54–270 (GERRTATFMI…RKVAMEKGFK (217 aa)) enclose the Radical SAM core domain. The segment at 285 to 310 (DEQVNEAAKERQRIGDEKLEAAKNEA) is disordered.

Belongs to the radical SAM superfamily. Lipoyl synthase family. [4Fe-4S] cluster serves as cofactor.

It is found in the cytoplasm. The enzyme catalyses [[Fe-S] cluster scaffold protein carrying a second [4Fe-4S](2+) cluster] + N(6)-octanoyl-L-lysyl-[protein] + 2 oxidized [2Fe-2S]-[ferredoxin] + 2 S-adenosyl-L-methionine + 4 H(+) = [[Fe-S] cluster scaffold protein] + N(6)-[(R)-dihydrolipoyl]-L-lysyl-[protein] + 4 Fe(3+) + 2 hydrogen sulfide + 2 5'-deoxyadenosine + 2 L-methionine + 2 reduced [2Fe-2S]-[ferredoxin]. It functions in the pathway protein modification; protein lipoylation via endogenous pathway; protein N(6)-(lipoyl)lysine from octanoyl-[acyl-carrier-protein]. Functionally, catalyzes the radical-mediated insertion of two sulfur atoms into the C-6 and C-8 positions of the octanoyl moiety bound to the lipoyl domains of lipoate-dependent enzymes, thereby converting the octanoylated domains into lipoylated derivatives. The sequence is that of Lipoyl synthase from Staphylococcus carnosus (strain TM300).